We begin with the raw amino-acid sequence, 1659 residues long: Cortactin-binding protein 2 (1659 aa).

The segment at 1 to 23 (MATDGASCEPDLSRAPEDAAGAA) is disordered. Residues 119–276 (RKMQERMSAQ…EQLKRGSDSK (158 aa)) are a coiled coil. Disordered regions lie at residues 324–436 (LTMP…LHPG) and 450–474 (GNAN…SPTS). Low complexity-rich tracts occupy residues 337 to 348 (ASANAKGSAAMA) and 381 to 392 (GPSTGLTPDPTS). The segment covering 405 to 418 (TAQTPGITPQNSQA) has biased composition (polar residues). The residue at position 494 (Arg494) is an Asymmetric dimethylarginine. Residues 495 to 612 (FTGPQAGAPP…SSPQLPPKPS (118 aa)) are disordered. The span at 579-589 (TVASPPSSLPQ) shows a compositional bias: polar residues. ANK repeat units follow at residues 705-735 (GRPT…DINY), 739-768 (DGHS…QVNA), 772-801 (NGFT…NINH), 805-834 (GGQT…DRNV), and 838-867 (DGWT…PAHG). The tract at residues 869–893 (SFSEEESESGVFDLDGGGESPEGKS) is disordered. An ANK 6 repeat occupies 908-938 (EGWTAAHIAASKGFKNCLEILCRHGGLETER). Positions 1443-1478 (KKKGESGAWRKVNTSPRRKSGRFSLPTWNKPDLSTE) are disordered. Residue Ser1520 is modified to Phosphoserine. The interval 1613–1659 (RSKVTQCSQNTKRNSSSSNTRQIEINNNSKEENWNLHKNEHLEKPNK) is disordered. Positions 1620 to 1634 (SQNTKRNSSSSNTRQ) are enriched in low complexity. Positions 1641–1659 (SKEENWNLHKNEHLEKPNK) are enriched in basic and acidic residues.

In terms of assembly, interacts with CTTN/cortactin SH3 domain. Interacts with STRN, STRN4/zinedin and MOB4/phocein; this interactions mediate the association with the STRIPAK core complex and may regulate dendritic spine distribution of the STRIPAK complex in hippocampal neurons. Activation of glutamate receptors weakens the interaction with STRN and STRN4.

The protein resides in the cytoplasm. The protein localises to the cell cortex. Its subcellular location is the cell projection. It localises to the dendritic spine. Its function is as follows. Regulates the dendritic spine distribution of CTTN/cortactin in hippocampal neurons, and thus controls dendritic spinogenesis and dendritic spine maintenance. Associates with the striatin-interacting phosphatase and kinase (STRIPAK) core complex to regulate dendritic spine distribution of the STRIPAK complex in hippocampal neurons. The polypeptide is Cortactin-binding protein 2 (CTTNBP2) (Saimiri boliviensis boliviensis (Bolivian squirrel monkey)).